Reading from the N-terminus, the 187-residue chain is MVNEFDKLRPGKLLLASANLLESNFKRTVLLMCEHNEQGSMGFILNRPMEFKVCEAIAGFEDIEEPLHMGGPVQVDTVHFIHSRGDSIDGAIEIFDGVFWGGDKDQLSYLINTGVINPNEIRFFLGYSGWGAGQLEQEFEEGSWYTADATREMIFTDAYERMWSRSVRSKGGEYRIVANSPELPGLN.

It belongs to the UPF0301 (AlgH) family.

The protein is UPF0301 protein Clim_0777 of Chlorobium limicola (strain DSM 245 / NBRC 103803 / 6330).